Here is a 1008-residue protein sequence, read N- to C-terminus: SKI family transcriptional corepressor 2 (1008 aa).

Disordered stretches follow at residues 280–315 (HLLG…DDDD) and 514–927 (EPGG…KKDV). Pro residues-rich tracts occupy residues 284-294 (APPPPPPPPPL) and 525-534 (APPPGQPPPV). 2 stretches are compositionally biased toward low complexity: residues 535-544 (VANGPGSGPP) and 578-595 (GVTS…SVGT). Over residues 626–635 (GGKDDAESLA) the composition is skewed to basic and acidic residues. Residues 649-666 (PAHHHHHHHHPHHHHHHP) are compositionally biased toward basic residues. A compositionally biased stretch (pro residues) spans 691–703 (APPPPPPPPPLAP). Acidic residues-rich tracts occupy residues 724-739 (DSSE…QEVD) and 748-766 (GEEE…EDEE). Over residues 787 to 797 (LSEKGSGRDRT) the composition is skewed to basic and acidic residues. Over residues 842–855 (SSSGGSRPGSPVHH) the composition is skewed to low complexity. Composition is skewed to basic and acidic residues over residues 856–872 (PSLE…KPKE), 880–890 (TKDDNFSDKNK), and 905–915 (FWRERSGEHTQ).

Belongs to the SKI family. In terms of assembly, interacts with SMAD2 and SMAD3. Expression is restricted to adult and embryonic central nervous system. Expressed at high levels in the developing cerebellum, ventral metencephalon and myelencephalon at 12.5 dpc (at protein level). In the adult cerebellum, expressed specifically in Purkinje cells.

It localises to the nucleus. The protein resides in the cytoplasm. Functionally, acts as a TGF-beta antagonist in the nervous system. Exhibits transcriptional repressor activity. This chain is SKI family transcriptional corepressor 2, found in Mus musculus (Mouse).